The sequence spans 220 residues: Adenylate kinase (220 aa).

12–17 (GAGKGT) lines the ATP pocket. An NMP region spans residues 32–62 (STGDIFRDIVKKENDELGKKIKEIMEKGELV). AMP is bound by residues Thr33, Arg38, 60–62 (ELV), 88–91 (GYPR), and Gln95. Residues 129–166 (SRRICPKCGRIYNMISLPPKEDELCDDCKVKLVQRDDD) are LID. Residue Arg130 participates in ATP binding. Zn(2+) contacts are provided by Cys133 and Cys136. 139-140 (IY) lines the ATP pocket. Cys153 and Cys156 together coordinate Zn(2+). AMP is bound by residues Arg163 and Arg174. Ile202 is an ATP binding site.

Belongs to the adenylate kinase family. In terms of assembly, monomer.

The protein resides in the cytoplasm. The catalysed reaction is AMP + ATP = 2 ADP. It participates in purine metabolism; AMP biosynthesis via salvage pathway; AMP from ADP: step 1/1. Functionally, catalyzes the reversible transfer of the terminal phosphate group between ATP and AMP. Plays an important role in cellular energy homeostasis and in adenine nucleotide metabolism. The sequence is that of Adenylate kinase from Thermotoga neapolitana.